We begin with the raw amino-acid sequence, 912 residues long: Nitrate reductase [NADH] (912 aa).

The segment at 1-99 is disordered; it reads SVEPRQPFGR…PRDEGTADAW (99 aa). The span at 13 to 23 shows a compositional bias: low complexity; the sequence is APATAPTARAP. Acidic residues predominate over residues 54–68; sequence AEEDEEDDDEDDEGH. Basic and acidic residues predominate over residues 85–94; sequence PSTRDPRDEG. Residue Cys-186 coordinates Mo-molybdopterin. The 76-residue stretch at 535 to 610 folds into the Cytochrome b5 heme-binding domain; it reads DKQFTMSEVR…LDTYRIGELI (76 aa). Residues His-570 and His-593 each contribute to the heme site. An FAD-binding FR-type domain is found at 651-764; sequence REKVPCRLVD…KGPLGHVEYT (114 aa). FAD-binding positions include 703–706, 720–724, Phe-725, Phe-732, 737–739, Ser-788, and Thr-791; these read RAYT, LVKVY, and LMT.

This sequence belongs to the nitrate reductase family. As to quaternary structure, homodimer. Requires FAD as cofactor. Heme is required as a cofactor. The cofactor is Mo-molybdopterin.

It catalyses the reaction nitrite + NAD(+) + H2O = nitrate + NADH + H(+). Nitrate reductase is a key enzyme involved in the first step of nitrate assimilation in plants, fungi and bacteria. This chain is Nitrate reductase [NADH], found in Hordeum vulgare (Barley).